Consider the following 354-residue polypeptide: Glutamine synthetase (354 aa).

The GS beta-grasp domain occupies 22-101 (FHAEYVWIDG…VLSETYNNDG (80 aa)). Positions 108–354 (HRHHTAKVME…IIIETTILDK (247 aa)) constitute a GS catalytic domain.

The protein belongs to the glutamine synthetase family. In terms of assembly, homooctamer.

Its subcellular location is the cytoplasm. It carries out the reaction L-glutamate + NH4(+) + ATP = L-glutamine + ADP + phosphate + H(+). The sequence is that of Glutamine synthetase (GLN1) from Amanita muscaria (Fly agaric).